A 202-amino-acid polypeptide reads, in one-letter code: Adenosylcobalamin/alpha-ribazole phosphatase (202 aa).

Residue H8 is the Tele-phosphohistidine intermediate of the active site. Residue E81 is the Proton donor/acceptor of the active site.

It belongs to the phosphoglycerate mutase family. In terms of assembly, monomer.

It catalyses the reaction adenosylcob(III)alamin 5'-phosphate + H2O = adenosylcob(III)alamin + phosphate. The catalysed reaction is alpha-ribazole 5'-phosphate + H2O = alpha-ribazole + phosphate. The protein operates within nucleoside biosynthesis; alpha-ribazole biosynthesis; alpha-ribazole from 5,6-dimethylbenzimidazole: step 2/2. Its function is as follows. Catalyzes the conversion of adenosylcobalamin 5'-phosphate to adenosylcobalamin (vitamin B12); involved in the assembly of the nucleotide loop of cobalamin. Also catalyzes the hydrolysis of the phospho group from alpha-ribazole 5'-phosphate to form alpha-ribazole. The protein is Adenosylcobalamin/alpha-ribazole phosphatase (cobC) of Salmonella typhimurium (strain LT2 / SGSC1412 / ATCC 700720).